We begin with the raw amino-acid sequence, 364 residues long: D-alanine--D-alanine ligase (364 aa).

An ATP-grasp domain is found at 134 to 347; sequence RRLACINGLK…YPDLLDELIN (214 aa). 167–222 provides a ligand contact to ATP; it reads ASEFGWPLFVKPCSLGSSVGIHKANNMDELNAAVADALRYDEEILVEEFIVGREIE. Aspartate 300, glutamate 314, and asparagine 316 together coordinate Mg(2+).

This sequence belongs to the D-alanine--D-alanine ligase family. Mg(2+) is required as a cofactor. It depends on Mn(2+) as a cofactor.

The protein resides in the cytoplasm. The enzyme catalyses 2 D-alanine + ATP = D-alanyl-D-alanine + ADP + phosphate + H(+). The protein operates within cell wall biogenesis; peptidoglycan biosynthesis. In terms of biological role, cell wall formation. The protein is D-alanine--D-alanine ligase of Legionella pneumophila (strain Paris).